The following is a 291-amino-acid chain: MKRVVLFLFTNLAVMLVLSVSARVLGVDRFLTGNGLDMGMLLLFAALIGFGGSFISLLMSKTMAKWSTGARVIQQPANQNEVWLVDTVSQLSKKAGLAMPEVAIYDGAPNAFATGPSKSRSLVAVSTGLLQSMDRKQVEAVLAHEVAHIDNGDMVTLTLIQGVLNTFVIFLSRVIAYAIDSFLRSDDDESGSPGIGYWISSIIFEIMFGILASVVVMYFSRKREYRADAGAAVLLGDRRPMIDALRALGGLQAGQLPKEMAASGIAGGGMMALFSSHPPLESRIAALESAR.

2 helical membrane-spanning segments follow: residues 4–24 and 38–58; these read VVLF…SARV and MGML…ISLL. His144 is a binding site for Zn(2+). Glu145 is an active-site residue. His148 is a binding site for Zn(2+). 2 helical membrane-spanning segments follow: residues 159–179 and 199–219; these read LIQG…AYAI and ISSI…VMYF. Glu224 provides a ligand contact to Zn(2+).

This sequence belongs to the peptidase M48B family. Requires Zn(2+) as cofactor.

The protein resides in the cell inner membrane. This is Protease HtpX homolog from Chlorobium phaeobacteroides (strain DSM 266 / SMG 266 / 2430).